The sequence spans 950 residues: Oxysterol-binding protein-related protein 1 (950 aa).

Residues M1–R237 form an interaction with RAB7A region. 3 ANK repeats span residues L47–V76, M80–I109, and L175–L204. Residues L235–A334 form the PH domain. Residues N430–K463 adopt a coiled-coil conformation. The FFAT signature appears at S469–S485. S499 carries the post-translational modification Phosphoserine. Residues E501–G521 show a composition bias toward basic and acidic residues. 3 disordered regions span residues E501 to S527, K795 to M816, and M881 to D913. The stretch at D877–D913 forms a coiled coil. Over residues S890–R901 the composition is skewed to basic and acidic residues.

Belongs to the OSBP family. Interacts (via FFAT motif) with VAPA and VAPB. Interacts with the GTP-bound form of RAB7A. Interacts with OAS1B. Interacts (via FFAT motif) with MOSPD2 (via MSP domain).

The protein localises to the late endosome. Binds phospholipids; exhibits strong binding to phosphatidic acid and weak binding to phosphatidylinositol 3-phosphate. Stabilizes GTP-bound RAB7A on late endosomes/lysosomes and alters functional properties of late endocytic compartments via its interaction with RAB7A. Binds 25-hydroxycholesterol and cholesterol. This chain is Oxysterol-binding protein-related protein 1, found in Homo sapiens (Human).